Reading from the N-terminus, the 85-residue chain is Ice-structuring protein 4 (85 aa).

Residues M1–P21 form the signal peptide.

It belongs to the type-I AFP family.

It is found in the secreted. In terms of biological role, contributes to protect fish blood from freezing at subzero sea water temperatures. Lowers the blood freezing point. Binds to nascent ice crystals and prevents further growth. The protein is Ice-structuring protein 4 of Pseudopleuronectes americanus (Winter flounder).